Here is a 130-residue protein sequence, read N- to C-terminus: Small ribosomal subunit protein uS11 (130 aa).

It belongs to the universal ribosomal protein uS11 family. As to quaternary structure, part of the 30S ribosomal subunit. Interacts with proteins S7 and S18. Binds to IF-3.

Its function is as follows. Located on the platform of the 30S subunit, it bridges several disparate RNA helices of the 16S rRNA. Forms part of the Shine-Dalgarno cleft in the 70S ribosome. The polypeptide is Small ribosomal subunit protein uS11 (Acholeplasma laidlawii (strain PG-8A)).